The primary structure comprises 481 residues: Endoplasmic reticulum lectin 1 (481 aa).

A signal peptide spans 1–27; the sequence is MRRSDRLRCAGASLLVVLCGVFRSSFG. 2 consecutive MRH domains span residues 108 to 245 and 340 to 467; these read SSCS…LCNH and SYCF…ICKI. Intrachain disulfides connect Cys-110/Cys-123, Cys-198/Cys-231, Cys-214/Cys-243, Cys-342/Cys-355, Cys-419/Cys-453, and Cys-434/Cys-465.

The protein resides in the endoplasmic reticulum lumen. Probable lectin that binds selectively to improperly folded lumenal proteins. May function in endoplasmic reticulum quality control and endoplasmic reticulum-associated degradation (ERAD) of both non-glycosylated proteins and glycoproteins. The polypeptide is Endoplasmic reticulum lectin 1 (erlec1) (Xenopus tropicalis (Western clawed frog)).